A 47-amino-acid polypeptide reads, in one-letter code: Large ribosomal subunit protein bL34 (47 aa).

Belongs to the bacterial ribosomal protein bL34 family.

This is Large ribosomal subunit protein bL34 from Mycobacteroides abscessus (strain ATCC 19977 / DSM 44196 / CCUG 20993 / CIP 104536 / JCM 13569 / NCTC 13031 / TMC 1543 / L948) (Mycobacterium abscessus).